The sequence spans 436 residues: MAVTVENLEKLERKMTLTLPLNTIQSEVATRLKKLARTVKMDGFRPGKVPMSVVSQRYAYSVHYEVMNDKVGEAFAVAANEAKLRVAGQPRISEKEDAPEGELAFDAIFEVYPDVKIADLANAEVEKLSAEVSDAAIDKTLDILRKQRRTFALRAADEPAQDGDRVTIDFEGKMDGETFAGGKAEDFQFIVGDGQMLKEFEDAVRGMKSGESKTFPLNFPADYHGKDVAGKQADFLVTVKKIEAAHLPEVNEELAKSLGIADATVEGLRSDIKKNLEREVKFRLLARNKNAVMDALVTNAELDLPNASVQAELERLIENARADLKQRGIKDADKAPIPEELFRPQAEKRVRLGLVVAELVRANELQAKPEQLKSHIEELAASYEKPQEVVRWYLSDNSRMAEVEAVVIENNVTDFVLGKAKVSEKAISFDELMGQN.

The region spanning 163 to 248 is the PPIase FKBP-type domain; the sequence is GDRVTIDFEG…VKKIEAAHLP (86 aa).

It belongs to the FKBP-type PPIase family. Tig subfamily.

It localises to the cytoplasm. It carries out the reaction [protein]-peptidylproline (omega=180) = [protein]-peptidylproline (omega=0). Its function is as follows. Involved in protein export. Acts as a chaperone by maintaining the newly synthesized protein in an open conformation. Functions as a peptidyl-prolyl cis-trans isomerase. This chain is Trigger factor, found in Polaromonas naphthalenivorans (strain CJ2).